A 1689-amino-acid polypeptide reads, in one-letter code: MVGELRYREFRVPLGPGLHAYPDELIRQRVGHNGHPEYQIRWLILRRGDDGDRDSTVDCKAEHILLWMSDDEIYANCHKMLGENGQVIAPSRESTEAGALDKSVLGEMETDVKSLIQRALRQLEECVGTVPPAPLLHTVHVLSAYASIEPLTGIFKDRRVVNLLMHMLSSPDYQIRWSAGRMIQALSSHDAGTRTQILLSLSQQEAIEKHLDFDSRCALLALFAQATLTEHPMSFEGVQLPQVPGRLLFSLVKRYLHVTFLLDRLNGDAGDQGAQNNFIPEELNVGRGRLELEFSMAMGTLISELVQAMRWDGASSRPESSSSSTFQPRPAQFRPYTQRFRRSRRFRPRASFASFNTYALYVRDTLRPGMRVRMLENYEEIAAGDEGQFRQSNDGVPPAQVLWDSTGHTYWVHWHMLEILGFEEDIEDVIDIEELQELGANGALSIVPPSQRWKPITQLFAEPYVVPEEEDREESENLTQAEWWELLFFIRQLSEAERLHIVDLLQDHLEEERVLDYDMLPELTVPVDLAQDLLLSLPQQLEDSALRDLFSCSVYRKYGPEVLVGHLSYPFVPGAQPNLFGANEESEAKDPPLQSASPALQRLVESLGPEGEVLVELEQALGSEAPQETEVKSCLLQLQEQPQPFLALMRSLDTSASNKTLHLTVLRILMQLVNFPEALLLPWHEAMDACVTCLRSPNTDREVLQELIFFLHRLTTTSRDYAVILNQLGARDAISKVLEKHRGKLELAQELRDMVSKCEKHAHLYRKLTTNILGGCIQMVLGQIEDHRRTHRPIQIPFFDVFLRYLCQGSSEEMKKNRYWEKVEVSSNPQRASRLTDRNPKTYWESSGRAGSHFITLHMRPGVIIRQLTLLVAGEDSSYMPAWVVVCGGNSIKSVNKELNTVNVMPSASRVTLLENLTRFWPIIQIRIKRCQQGGINTRIRGLEVLGPKPTFWPVFREQLCRHTRLFYMVRAQAWSQDIAEDRRSLLHLSSRLNGALRHEQNFAERFLPDMEAAQALSKTCWEALVSPLVQNITSPDEDSTSSLGWLLDQYLGCREAAYNPQSRAAAFSSRVRRLTHLLVHVEPREAAPPVVAIPRSKGRNRIHDWSYLITRGLPSSIMKNLTRCWRSVVEEQMNKFLTASWKDDDFVPRYCERYYVLQKSSSELFGPRAAFLLAMRNGCADAVLRLPFLRAAHVSEQFARHIDQRIQGSRMGGARGMEMLAQLQRCLESVLIFSPLEIATTFEHYYQHYMADRLLSVGSSWLEGAVLEQIGPCFPSRLPQQMLQSLNVSEELQRQFHVYQLQQLDQELLKLEDTEKKIQVAHEDSGREDKSKKEEAIGEAAAVAMAEEEDQGKKEEGEEEGEGEDEEEERYYKGTMPEVCVLVVTPRFWPVASVCQMLNPATCLPAYLRGTINHYTNFYSKSQSRSSLEKEPQRRLQWTWQGRAEVQFGGQILHVSTVQMWLLLHLNNQKEVSVESLQAISELPPDVLHRAIGPLTSSRGPLDLQEQKNVPGGVLKIRDDSEEPRPRRGNVWLIPPQTYLQAEAEEGRNMEKRRNLLNCLVVRILKAHGDEGLHVDRLVYLVLEAWEKGPCPARGLVSSLGRGATCRSSDVLSCILHLLVKGTLRRHDDRPQVLYYAVPVTVMEPHMESLNPGSAGPNPPLTFHTLQIRSRGVPYASCTDNHTFSTFR.

The CPH domain maps to 349 to 422 (RASFASFNTY…HWHMLEILGF (74 aa)). The DOC domain maps to 793-972 (PIQIPFFDVF…HTRLFYMVRA (180 aa)). The segment covering 1321 to 1337 (VAHEDSGREDKSKKEEA) has biased composition (basic and acidic residues). A disordered region spans residues 1321 to 1371 (VAHEDSGREDKSKKEEAIGEAAAVAMAEEEDQGKKEEGEEEGEGEDEEEER). The segment covering 1358–1370 (GEEEGEGEDEEEE) has biased composition (acidic residues). Residue lysine 1567 forms a Glycyl lysine isopeptide (Lys-Gly) (interchain with G-Cter in NEDD8) linkage.

It belongs to the cullin family. In terms of assembly, component of the 3M complex, composed of core components CUL7, CCDC8 and OBSL1. Component of the Cul7-RING(FBXW8) complex consisting of CUL7, RBX1, SKP1 and FBXW8. Within the Cul7-RING(FBXW8) complex interacts with FBXW8 and RBX1, but not with SKP1. Interacts with CUL1 (via the C-terminal domain); the interaction seems to be mediated by FBXW8; it is likely specific to FBXW8, but not other F-box proteins. Interacts (via the CPH domain) with p53/TP53; the interaction preferentially involves tetrameric and dimeric p53/TP53; this interaction recruits p53/TP53 for ubiquitination by neddylated CUL1-RBX1. The CUL7-CUL9 heterodimer seems to interact specifically with p53/TP53. Interacts with FBXW8; interaction is mutually exclusive of binding to CUL9 or p53/TP53. Interacts with CUL9; leading to inhibited CUL9 activity. Interacts with OBSL1. Interacts (as part of the 3M complex) with HDAC4 and HDAC5; it is negatively regulated by ANKRA2.

The protein resides in the cytoplasm. It is found in the cytoskeleton. Its subcellular location is the microtubule organizing center. The protein localises to the centrosome. It localises to the perinuclear region. The protein resides in the golgi apparatus. It participates in protein modification; protein ubiquitination. In terms of biological role, core component of the 3M and Cul7-RING(FBXW8) complexes, which mediate the ubiquitination and subsequent proteasomal degradation of target proteins. Core component of the 3M complex, a complex required to regulate microtubule dynamics and genome integrity. It is unclear how the 3M complex regulates microtubules, it could act by controlling the level of a microtubule stabilizer. The Cul7-RING(FBXW8) complex alone lacks ubiquitination activity and does not promote polyubiquitination and proteasomal degradation of p53/TP53. However it mediates recruitment of p53/TP53 for ubiquitination by neddylated CUL1-RBX1. Interaction with CUL9 is required to inhibit CUL9 activity and ubiquitination of BIRC5. The Cul7-RING(FBXW8) complex also mediates ubiquitination and consequent degradation of target proteins such as GORASP1, IRS1 and MAP4K1/HPK1. Ubiquitination of GORASP1 regulates Golgi morphogenesis and dendrite patterning in brain. Mediates ubiquitination and degradation of IRS1 in a mTOR-dependent manner: the Cul7-RING(FBXW8) complex recognizes and binds IRS1 previously phosphorylated by S6 kinase (RPS6KB1 or RPS6KB2). The Cul7-RING(FBXW8) complex also mediates ubiquitination of MAP4K1/HPK1: recognizes and binds autophosphorylated MAP4K1/HPK1, leading to its degradation, thereby affecting cell proliferation and differentiation. Acts as a regulator in trophoblast cell epithelial-mesenchymal transition and placental development. While the Cul7-RING(FBXW8) and the 3M complexes are associated and involved in common processes, CUL7 and the Cul7-RING(FBXW8) complex may have additional functions. Probably plays a role in the degradation of proteins involved in endothelial proliferation and/or differentiation. In Mus musculus (Mouse), this protein is Cullin-7 (Cul7).